Consider the following 1108-residue polypeptide: Isoleucine--tRNA ligase (1108 aa).

Residues 53–63 (PFANGLPHYGH) carry the 'HIGH' region motif. A 'KMSKS' region motif is present at residues 654 to 658 (KLSKR). Residue Lys657 participates in ATP binding.

It belongs to the class-I aminoacyl-tRNA synthetase family. IleS type 2 subfamily. Monomer. Zn(2+) serves as cofactor.

It is found in the cytoplasm. It catalyses the reaction tRNA(Ile) + L-isoleucine + ATP = L-isoleucyl-tRNA(Ile) + AMP + diphosphate. Its function is as follows. Catalyzes the attachment of isoleucine to tRNA(Ile). As IleRS can inadvertently accommodate and process structurally similar amino acids such as valine, to avoid such errors it has two additional distinct tRNA(Ile)-dependent editing activities. One activity is designated as 'pretransfer' editing and involves the hydrolysis of activated Val-AMP. The other activity is designated 'posttransfer' editing and involves deacylation of mischarged Val-tRNA(Ile). This chain is Isoleucine--tRNA ligase, found in Rickettsia bellii (strain OSU 85-389).